A 949-amino-acid chain; its full sequence is Glycine dehydrogenase (decarboxylating) (949 aa).

Lys-704 bears the N6-(pyridoxal phosphate)lysine mark.

The protein belongs to the GcvP family. In terms of assembly, the glycine cleavage system is composed of four proteins: P, T, L and H. Pyridoxal 5'-phosphate is required as a cofactor.

The enzyme catalyses N(6)-[(R)-lipoyl]-L-lysyl-[glycine-cleavage complex H protein] + glycine + H(+) = N(6)-[(R)-S(8)-aminomethyldihydrolipoyl]-L-lysyl-[glycine-cleavage complex H protein] + CO2. The glycine cleavage system catalyzes the degradation of glycine. The P protein binds the alpha-amino group of glycine through its pyridoxal phosphate cofactor; CO(2) is released and the remaining methylamine moiety is then transferred to the lipoamide cofactor of the H protein. The polypeptide is Glycine dehydrogenase (decarboxylating) (Bacteroides fragilis (strain YCH46)).